Reading from the N-terminus, the 636-residue chain is Threonine--tRNA ligase (636 aa).

One can recognise a TGS domain in the interval 1–61 (MINITLPDDS…RNDCAVRLIT (61 aa)). The interval 238–528 (DHRKIGTRMG…LVEHFAGKFP (291 aa)) is catalytic. 3 residues coordinate Zn(2+): C329, H380, and H505.

It belongs to the class-II aminoacyl-tRNA synthetase family. As to quaternary structure, homodimer. Zn(2+) serves as cofactor.

The protein resides in the cytoplasm. The enzyme catalyses tRNA(Thr) + L-threonine + ATP = L-threonyl-tRNA(Thr) + AMP + diphosphate + H(+). Functionally, catalyzes the attachment of threonine to tRNA(Thr) in a two-step reaction: L-threonine is first activated by ATP to form Thr-AMP and then transferred to the acceptor end of tRNA(Thr). Also edits incorrectly charged L-seryl-tRNA(Thr). This is Threonine--tRNA ligase from Desulforapulum autotrophicum (strain ATCC 43914 / DSM 3382 / VKM B-1955 / HRM2) (Desulfobacterium autotrophicum).